Reading from the N-terminus, the 321-residue chain is CPX chromosomal region candidate gene 1 protein homolog (321 aa).

A disordered region spans residues 1-83 (MSSPTKEGSD…TEIQKDQREE (83 aa)). 2 stretches are compositionally biased toward polar residues: residues 21 to 32 (NEPSNDCTTDIE) and 44 to 60 (VETN…TSQE).

This Macaca fascicularis (Crab-eating macaque) protein is CPX chromosomal region candidate gene 1 protein homolog (CPXCR1).